We begin with the raw amino-acid sequence, 367 residues long: tRNA-specific 2-thiouridylase MnmA (367 aa).

Residues 24-31 (AMSGGVDS) and Leu50 each bind ATP. Residue Cys115 is the Nucleophile of the active site. A disulfide bridge connects residues Cys115 and Cys211. Position 139 (Gly139) interacts with ATP. Residues 161–163 (KDQ) form an interaction with tRNA region. Cys211 acts as the Cysteine persulfide intermediate in catalysis.

This sequence belongs to the MnmA/TRMU family.

Its subcellular location is the cytoplasm. It carries out the reaction S-sulfanyl-L-cysteinyl-[protein] + uridine(34) in tRNA + AH2 + ATP = 2-thiouridine(34) in tRNA + L-cysteinyl-[protein] + A + AMP + diphosphate + H(+). Functionally, catalyzes the 2-thiolation of uridine at the wobble position (U34) of tRNA, leading to the formation of s(2)U34. This chain is tRNA-specific 2-thiouridylase MnmA, found in Ehrlichia canis (strain Jake).